A 296-amino-acid polypeptide reads, in one-letter code: Fructose-bisphosphate aldolase class 1 (296 aa).

The active-site Proton acceptor is Glu-175. Lys-212 acts as the Schiff-base intermediate with dihydroxyacetone-P in catalysis.

It belongs to the class I fructose-bisphosphate aldolase family.

It catalyses the reaction beta-D-fructose 1,6-bisphosphate = D-glyceraldehyde 3-phosphate + dihydroxyacetone phosphate. It participates in carbohydrate degradation; glycolysis; D-glyceraldehyde 3-phosphate and glycerone phosphate from D-glucose: step 4/4. The polypeptide is Fructose-bisphosphate aldolase class 1 (Staphylococcus aureus (strain Mu3 / ATCC 700698)).